Consider the following 210-residue polypeptide: N-(5'-phosphoribosyl)anthranilate isomerase (210 aa).

The protein belongs to the TrpF family.

The catalysed reaction is N-(5-phospho-beta-D-ribosyl)anthranilate = 1-(2-carboxyphenylamino)-1-deoxy-D-ribulose 5-phosphate. Its pathway is amino-acid biosynthesis; L-tryptophan biosynthesis; L-tryptophan from chorismate: step 3/5. This Pseudomonas fluorescens (strain SBW25) protein is N-(5'-phosphoribosyl)anthranilate isomerase.